The primary structure comprises 495 residues: Major facilitator-type transporter hxnP (495 aa).

The interval 1–24 (MGATATDIEKVPSAGTPDEPKAGE) is disordered. Transmembrane regions (helical) follow at residues 36 to 55 (SFVRKVDFFVLPMLCLMYFF), 84 to 104 (LLILLFYIPFGLFDLPWNLLI), 123 to 143 (VWGICALCQCAANNFGGLLAI), 145 to 165 (IILGVFEAGFFAGSTFYFTLF), and 177 to 197 (VLQSFAVLASAFSGLISFGLF). Asn-200 carries N-linked (GlcNAc...) asparagine glycosylation. The next 5 helical transmembrane spans lie at 209–229 (WLFIVEGAMTLIIGVIGFWWL), 282–302 (VITFSYPVAYATAMNFFPIIV), 314–334 (LWTVAPNLVGAVVLLVVAKSS), 341–361 (SLHIIFSLTVSLVGMLILASI), and 368–388 (GVSYFACFLLASGAYIPTCLV). An N-linked (GlcNAc...) asparagine glycan is attached at Asn-395. The next 2 membrane-spanning stretches (helical) occupy residues 404 to 424 (ANTGFFVGLGNIAGVLSAATF) and 436 to 456 (LVATCACNGVCILATAFMGTW).

This sequence belongs to the major facilitator superfamily.

It is found in the cell membrane. Major facilitator-type transporter, part of the hnx cluster involved in the purine degradation. The nicotinate hydroxylase hnxS accepts nicotinate as a substrate and catalyzes the first step of nicotinate catabolism. The major facilitator-type transporters hxnP and hxnZ are probably involved in the uptake of nicotinate-derived metabolites, and the oxidoreductases hxnT and hxnY in the further metabolism of 6-OH nicotinic acid. The sequence is that of Major facilitator-type transporter hxnP from Emericella nidulans (strain FGSC A4 / ATCC 38163 / CBS 112.46 / NRRL 194 / M139) (Aspergillus nidulans).